The following is a 276-amino-acid chain: Large ribosomal subunit protein uL2 (276 aa).

The interval N203 to K276 is disordered. Positions G210–Q220 are enriched in basic residues. The segment covering K265 to K276 has biased composition (basic and acidic residues).

Belongs to the universal ribosomal protein uL2 family. Part of the 50S ribosomal subunit. Forms a bridge to the 30S subunit in the 70S ribosome.

In terms of biological role, one of the primary rRNA binding proteins. Required for association of the 30S and 50S subunits to form the 70S ribosome, for tRNA binding and peptide bond formation. It has been suggested to have peptidyltransferase activity; this is somewhat controversial. Makes several contacts with the 16S rRNA in the 70S ribosome. The polypeptide is Large ribosomal subunit protein uL2 (Coprothermobacter proteolyticus (strain ATCC 35245 / DSM 5265 / OCM 4 / BT)).